The primary structure comprises 100 residues: Large ribosomal subunit protein uL23 (100 aa).

It belongs to the universal ribosomal protein uL23 family. Part of the 50S ribosomal subunit. Contacts protein L29, and trigger factor when it is bound to the ribosome.

In terms of biological role, one of the early assembly proteins it binds 23S rRNA. One of the proteins that surrounds the polypeptide exit tunnel on the outside of the ribosome. Forms the main docking site for trigger factor binding to the ribosome. In Vibrio cholerae serotype O1 (strain ATCC 39541 / Classical Ogawa 395 / O395), this protein is Large ribosomal subunit protein uL23.